The primary structure comprises 207 residues: Holliday junction resolvase RecU (207 aa).

Residues Met-1–Ser-21 are disordered. Thr-87, Asp-89, Glu-102, and Gln-121 together coordinate Mg(2+).

It belongs to the RecU family. Requires Mg(2+) as cofactor.

It is found in the cytoplasm. The catalysed reaction is Endonucleolytic cleavage at a junction such as a reciprocal single-stranded crossover between two homologous DNA duplexes (Holliday junction).. Functionally, endonuclease that resolves Holliday junction intermediates in genetic recombination. Cleaves mobile four-strand junctions by introducing symmetrical nicks in paired strands. Promotes annealing of linear ssDNA with homologous dsDNA. Required for DNA repair, homologous recombination and chromosome segregation. This is Holliday junction resolvase RecU from Lactiplantibacillus plantarum (strain ATCC BAA-793 / NCIMB 8826 / WCFS1) (Lactobacillus plantarum).